The chain runs to 266 residues: GTP cyclohydrolase III (266 aa).

It belongs to the archaeal-type GTP cyclohydrolase family.

The catalysed reaction is GTP + 3 H2O = 2-amino-5-formylamino-6-(5-phospho-D-ribosylamino)pyrimidin-4(3H)-one + 2 phosphate + 2 H(+). Its function is as follows. Catalyzes the formation of 2-amino-5-formylamino-6-ribofuranosylamino-4(3H)-pyrimidinone ribonucleotide monophosphate and inorganic phosphate from GTP. Also has an independent pyrophosphate phosphohydrolase activity. The polypeptide is GTP cyclohydrolase III (Methanococcus maripaludis (strain C5 / ATCC BAA-1333)).